The sequence spans 164 residues: uncharacterized protein (164 aa).

The transit peptide at 1–60 directs the protein to the chloroplast; the sequence is MERSASVGVNDGRFGGNQFYSPSFSSSSSSSSMRHVNYSCGSCGYELNLSSTNRITSTIG.

The protein resides in the plastid. Its subcellular location is the chloroplast. This is an uncharacterized protein from Arabidopsis thaliana (Mouse-ear cress).